Consider the following 124-residue polypeptide: Large ribosomal subunit protein mL52 (124 aa).

The transit peptide at 1–23 directs the protein to the mitochondrion; it reads MAALGMLLSTGVRRLHCGSAARA. The segment at 99-124 is disordered; sequence LQEEKRKQQNALKPKGVLLQNPGPSQ.

Belongs to the mitochondrion-specific ribosomal protein mL52 family. In terms of assembly, component of the mitochondrial ribosome large subunit (39S) which comprises a 16S rRNA and about 50 distinct proteins.

It localises to the mitochondrion. The chain is Large ribosomal subunit protein mL52 (MRPL52) from Bos taurus (Bovine).